We begin with the raw amino-acid sequence, 279 residues long: MLIINDNNLSGPLQRVNGTGELSVQFKDGRSRISRLYQEGAAKIRMPQAVTGPLEAILINTSGGLTGGDRLKWDVALDDGASAVITTQACERIYRSGGGEARIATRLKAAKGTRLAWLPQETILFNRSILSRRLDVELEEGAQMLVVEATVFGRLAMGERVVAARFADRWRVRLGGRVIHAEEFRLGPDVGAELQAPAVAGGACAMATVLMVCEQAGRHLETARAIIGEEGGCSLWRVGKASKLVVRLYAPDSYALRRRLCPLVALLNGKAGLPKVWTI.

Belongs to the UreD family. In terms of assembly, ureD, UreF and UreG form a complex that acts as a GTP-hydrolysis-dependent molecular chaperone, activating the urease apoprotein by helping to assemble the nickel containing metallocenter of UreC. The UreE protein probably delivers the nickel.

The protein localises to the cytoplasm. Required for maturation of urease via the functional incorporation of the urease nickel metallocenter. The protein is Urease accessory protein UreD of Brucella suis (strain ATCC 23445 / NCTC 10510).